A 382-amino-acid chain; its full sequence is Per os infectivity factor 2 (382 aa).

As to quaternary structure, forms the PIF complex together with PIF1 and PIF3. The complex also interacts with per os infectivity factor PIF0.

Functionally, per os infectivity factor that mediates the specific binding of occluded virions (ODV) to the host midgut target cells. The sequence is that of Per os infectivity factor 2 from Autographa californica nuclear polyhedrosis virus (AcMNPV).